A 224-amino-acid chain; its full sequence is uncharacterized protein (224 aa).

The span at 44 to 139 (TSPPIVPLPT…PSPPPSPSPL (96 aa)) shows a compositional bias: pro residues. Residues 44-145 (TSPPIVPLPT…PSPLGEPMYY (102 aa)) form a disordered region.

This is an uncharacterized protein from Lepidoptera (butterflies and moths).